A 344-amino-acid polypeptide reads, in one-letter code: DNA-directed RNA polymerase subunit alpha (344 aa).

Residues 1-238 form an alpha N-terminal domain (alpha-NTD) region; it reads MKVIKTAPLI…KQLGVFGERP (238 aa). The interval 254–344 is alpha C-terminal domain (alpha-CTD); the sequence is AKDLSAKIES…EKLEDKGGND (91 aa).

The protein belongs to the RNA polymerase alpha chain family. Homodimer. The RNAP catalytic core consists of 2 alpha, 1 beta, 1 beta' and 1 omega subunit. When a sigma factor is associated with the core the holoenzyme is formed, which can initiate transcription.

It carries out the reaction RNA(n) + a ribonucleoside 5'-triphosphate = RNA(n+1) + diphosphate. In terms of biological role, DNA-dependent RNA polymerase catalyzes the transcription of DNA into RNA using the four ribonucleoside triphosphates as substrates. This is DNA-directed RNA polymerase subunit alpha from Helicobacter pylori (strain ATCC 700392 / 26695) (Campylobacter pylori).